A 552-amino-acid polypeptide reads, in one-letter code: MAEKQKHDGRVKIGHYVLGDTLGVGTFGKVKIGEHQLTGHKVAVKILNRQKIRSLDVVGKIKREIQNLKLFRHPHIIKLYQVISTPTDFFMVMEYVSGGELFDYICKHGRVEEMEARRLFQQILSAVDYCHRHMVVHRDLKPENVLLDAQMNAKIADFGLSNMMSDGEFLRTSCGSPNYAAPEVISGRLYAGPEVDIWSCGVILYALLCGTLPFDDEHVPTLFKKIRGGVFYIPEYLNRSVATLLMHMLQVDPLKRATIKDIREHEWFKQDLPSYLFPEDPSYDANVIDDEAVKEVCEKFECTESEVMNSLYSGDPQDQLAVAYHLVIDNRRIMNQASEFYLASSPPTGSFMDDSAMHIPPGLKPHPERMPPLIADSPKARCPLDALNTTKPKSLAVKKAKWHLGIRSQSKPYDIMAEVYRAMKQLDFEWKVVNAYHLRVRRKNPVTGNYVKMSLQLYLVDNRSYLLDFKSIDDEVLEQRSGSSTPQRSCSAAGLHRPRSSLDSVTAESHSLSGSLSGSLTGSMLPSVPPRLGSHTMDFFEMCASLITTLAR.

Positions 16–268 (YVLGDTLGVG…IKDIREHEWF (253 aa)) constitute a Protein kinase domain. ATP contacts are provided by residues 22 to 30 (LGVGTFGKV) and lysine 45. Residue aspartate 139 is the Proton acceptor of the active site. Threonine 172 is subject to Phosphothreonine; by LKB1 and CaMKK2. A Phosphothreonine modification is found at threonine 258. An AIS region spans residues 291–376 (EAVKEVCEKF…PERMPPLIAD (86 aa)). At serine 377 the chain carries Phosphoserine. The segment at 478–519 (EQRSGSSTPQRSCSAAGLHRPRSSLDSVTAESHSLSGSLSGS) is disordered. The span at 480–490 (RSGSSTPQRSC) shows a compositional bias: polar residues. Serine 491 bears the Phosphoserine mark. The segment covering 509–519 (SHSLSGSLSGS) has biased composition (low complexity).

Belongs to the protein kinase superfamily. CAMK Ser/Thr protein kinase family. SNF1 subfamily. In terms of assembly, AMPK is a heterotrimer of an alpha catalytic subunit (PRKAA1 or PRKAA2), a beta (PRKAB1 or PRKAB2) and a gamma non-catalytic subunits (PRKAG1, PRKAG2 or PRKAG3). Interacts with FNIP1 and FNIP2. Interacts with DUSP29. Interacts with ARF6. The phosphorylated form at Thr-172 mediated by CamKK2 interacts with ACSS2. Mg(2+) is required as a cofactor. In terms of processing, ubiquitinated. Phosphorylated at Thr-172 by STK11/LKB1 in complex with STE20-related adapter-alpha (STRADA) pseudo kinase and CAB39. Also phosphorylated at Thr-172 by CAMKK2; triggered by a rise in intracellular calcium ions, without detectable changes in the AMP/ATP ratio. CAMKK1 can also phosphorylate Thr-172, but at much lower level. Dephosphorylated by protein phosphatase 2A and 2C (PP2A and PP2C). Phosphorylated by ULK1; leading to negatively regulate AMPK activity and suggesting the existence of a regulatory feedback loop between ULK1 and AMPK. Dephosphorylated by PPM1A and PPM1B at Thr-172 (mediated by STK11/LKB1).

It is found in the cytoplasm. Its subcellular location is the nucleus. It catalyses the reaction L-seryl-[protein] + ATP = O-phospho-L-seryl-[protein] + ADP + H(+). The catalysed reaction is L-threonyl-[protein] + ATP = O-phospho-L-threonyl-[protein] + ADP + H(+). The enzyme catalyses L-seryl-[acetyl-CoA carboxylase] + ATP = O-phospho-L-seryl-[acetyl-CoA carboxylase] + ADP + H(+). It carries out the reaction L-seryl-[3-hydroxy-3-methylglutaryl-coenzyme A reductase] + ATP = O-phospho-L-seryl-[3-hydroxy-3-methylglutaryl-coenzyme A reductase] + ADP + H(+). Activated by phosphorylation on Thr-172. Binding of AMP to non-catalytic gamma subunit (PRKAG1, PRKAG2 or PRKAG3) results in allosteric activation, inducing phosphorylation on Thr-172. AMP-binding to gamma subunit also sustains activity by preventing dephosphorylation of Thr-172. ADP also stimulates Thr-172 phosphorylation, without stimulating already phosphorylated AMPK. ATP promotes dephosphorylation of Thr-172, rendering the enzyme inactive. Under physiological conditions AMPK mainly exists in its inactive form in complex with ATP, which is much more abundant than AMP. Selectively inhibited by compound C (6-[4-(2-Piperidin-1-yl-ethoxy)-phenyl)]-3-pyridin-4-yl-pyyrazolo[1,5-a] pyrimidine. Activated by resveratrol, a natural polyphenol present in red wine, and S17834, a synthetic polyphenol. Salicylate/aspirin directly activates kinase activity, primarily by inhibiting Thr-172 dephosphorylation. Its function is as follows. Catalytic subunit of AMP-activated protein kinase (AMPK), an energy sensor protein kinase that plays a key role in regulating cellular energy metabolism. In response to reduction of intracellular ATP levels, AMPK activates energy-producing pathways and inhibits energy-consuming processes: inhibits protein, carbohydrate and lipid biosynthesis, as well as cell growth and proliferation. AMPK acts via direct phosphorylation of metabolic enzymes, and by longer-term effects via phosphorylation of transcription regulators. Regulates lipid synthesis by phosphorylating and inactivating lipid metabolic enzymes such as ACACA, ACACB, GYS1, HMGCR and LIPE; regulates fatty acid and cholesterol synthesis by phosphorylating acetyl-CoA carboxylase (ACACA and ACACB) and hormone-sensitive lipase (LIPE) enzymes, respectively. Promotes lipolysis of lipid droplets by mediating phosphorylation of isoform 1 of CHKA (CHKalpha2). Regulates insulin-signaling and glycolysis by phosphorylating IRS1, PFKFB2 and PFKFB3. Involved in insulin receptor/INSR internalization. AMPK stimulates glucose uptake in muscle by increasing the translocation of the glucose transporter SLC2A4/GLUT4 to the plasma membrane, possibly by mediating phosphorylation of TBC1D4/AS160. Regulates transcription and chromatin structure by phosphorylating transcription regulators involved in energy metabolism such as CRTC2/TORC2, FOXO3, histone H2B, HDAC5, MEF2C, MLXIPL/ChREBP, EP300, HNF4A, p53/TP53, SREBF1, SREBF2 and PPARGC1A. Acts as a key regulator of glucose homeostasis in liver by phosphorylating CRTC2/TORC2, leading to CRTC2/TORC2 sequestration in the cytoplasm. In response to stress, phosphorylates 'Ser-36' of histone H2B (H2BS36ph), leading to promote transcription. Acts as a key regulator of cell growth and proliferation by phosphorylating FNIP1, TSC2, RPTOR, WDR24 and ATG1/ULK1: in response to nutrient limitation, negatively regulates the mTORC1 complex by phosphorylating RPTOR component of the mTORC1 complex and by phosphorylating and activating TSC2. Also phosphorylates and inhibits GATOR2 subunit WDR24 in response to nutrient limitation, leading to suppress glucose-mediated mTORC1 activation. In response to energetic stress, phosphorylates FNIP1, inactivating the non-canonical mTORC1 signaling, thereby promoting nuclear translocation of TFEB and TFE3, and inducing transcription of lysosomal or autophagy genes. In response to nutrient limitation, promotes autophagy by phosphorylating and activating ATG1/ULK1. In that process also activates WDR45/WIPI4. Phosphorylates CASP6, thereby preventing its autoprocessing and subsequent activation. AMPK also acts as a regulator of circadian rhythm by mediating phosphorylation of CRY1, leading to destabilize it. May regulate the Wnt signaling pathway by phosphorylating CTNNB1, leading to stabilize it. Also acts as a regulator of cellular polarity by remodeling the actin cytoskeleton; probably by indirectly activating myosin. Also phosphorylates CFTR, EEF2K, KLC1, NOS3 and SLC12A1. Plays an important role in the differential regulation of pro-autophagy (composed of PIK3C3, BECN1, PIK3R4 and UVRAG or ATG14) and non-autophagy (composed of PIK3C3, BECN1 and PIK3R4) complexes, in response to glucose starvation. Can inhibit the non-autophagy complex by phosphorylating PIK3C3 and can activate the pro-autophagy complex by phosphorylating BECN1. Upon glucose starvation, promotes ARF6 activation in a kinase-independent manner leading to cell migration. Upon glucose deprivation mediates the phosphorylation of ACSS2 at 'Ser-659', which exposes the nuclear localization signal of ACSS2, required for its interaction with KPNA1 and nuclear translocation. Upon stress, regulates mitochondrial fragmentation through phosphorylation of MTFR1L. In Sus scrofa (Pig), this protein is 5'-AMP-activated protein kinase catalytic subunit alpha-2 (PRKAA2).